The chain runs to 503 residues: Arabinose import ATP-binding protein AraG (503 aa).

ABC transporter domains are found at residues 5-240 (LRFD…MVGR) and 253-497 (LGDV…LPQG). 37–44 (GENGAGKS) lines the ATP pocket.

The protein belongs to the ABC transporter superfamily. Arabinose importer (TC 3.A.1.2.2) family. In terms of assembly, the complex is composed of two ATP-binding proteins (AraG), two transmembrane proteins (AraH) and a solute-binding protein (AraF).

The protein localises to the cell inner membrane. The catalysed reaction is L-arabinose(out) + ATP + H2O = L-arabinose(in) + ADP + phosphate + H(+). Functionally, part of the ABC transporter complex AraFGH involved in arabinose import. Responsible for energy coupling to the transport system. This chain is Arabinose import ATP-binding protein AraG, found in Burkholderia pseudomallei (strain 1710b).